The sequence spans 984 residues: Protein translocase subunit SecA (984 aa).

ATP contacts are provided by residues Q96, 114 to 118 (GEGKT), and D595. Composition is skewed to basic and acidic residues over residues 930-942 (EHEE…RLLE) and 952-971 (KSDK…EERL). The segment at 930-984 (EHEEEKKHQRLLEEAELQGVQGKSDKKPRPKTLKERLKEERLRKRKLKAKKKEQE) is disordered. Over residues 972–984 (RKRKLKAKKKEQE) the composition is skewed to basic residues.

It belongs to the SecA family. In terms of assembly, monomer and homodimer. Part of the essential Sec protein translocation apparatus which comprises SecA, SecYEG and auxiliary proteins SecDF. Other proteins may also be involved.

It localises to the cell inner membrane. It is found in the cytoplasm. The catalysed reaction is ATP + H2O + cellular proteinSide 1 = ADP + phosphate + cellular proteinSide 2.. Its function is as follows. Part of the Sec protein translocase complex. Interacts with the SecYEG preprotein conducting channel. Has a central role in coupling the hydrolysis of ATP to the transfer of proteins into and across the cell membrane, serving as an ATP-driven molecular motor driving the stepwise translocation of polypeptide chains across the membrane. The chain is Protein translocase subunit SecA from Aquifex aeolicus (strain VF5).